Here is a 353-residue protein sequence, read N- to C-terminus: uncharacterized protein (353 aa).

Residues 267–287 (GLPLVVIEAMAFGLPIVAFNC) form a helical membrane-spanning segment.

It belongs to the glycosyltransferase group 1 family. Glycosyltransferase 4 subfamily.

Its subcellular location is the membrane. This is an uncharacterized protein from Haemophilus influenzae (strain ATCC 51907 / DSM 11121 / KW20 / Rd).